The sequence spans 374 residues: Glutamate 5-kinase (374 aa).

ATP is bound at residue lysine 9. Substrate is bound by residues serine 49, aspartate 136, and asparagine 148. ATP is bound by residues 168–169 (TD) and 210–216 (TGGMKSK). A PUA domain is found at 276–354 (SGVVRIDQGA…DEAKQLIPLV (79 aa)).

The protein belongs to the glutamate 5-kinase family.

Its subcellular location is the cytoplasm. The enzyme catalyses L-glutamate + ATP = L-glutamyl 5-phosphate + ADP. It participates in amino-acid biosynthesis; L-proline biosynthesis; L-glutamate 5-semialdehyde from L-glutamate: step 1/2. Its function is as follows. Catalyzes the transfer of a phosphate group to glutamate to form L-glutamate 5-phosphate. This Halalkalibacterium halodurans (strain ATCC BAA-125 / DSM 18197 / FERM 7344 / JCM 9153 / C-125) (Bacillus halodurans) protein is Glutamate 5-kinase.